Consider the following 172-residue polypeptide: MDKVLNREESMELMDLLGLERAAWGNLPLMRKAYLRKCKEFHPDKGGDEDKMKRMNTLYKKMEQDVKVAHQPDFGTWSSSEVCADFPLCPDTLYCKEWPICSKKPSVHCPCMLCQLRLRHLNRKFLRKEPLVWIDCYCIDCFTQWFGLDLTEETLQWWVQIIGETPFRDLKL.

Met-1 is subject to N-acetylmethionine; by host. The region spanning 12-75 (ELMDLLGLER…VKVAHQPDFG (64 aa)) is the J domain. The C4-type; atypical zinc finger occupies 101-114 (CSKKPSVHCPCMLC). The H1C3-type; atypical zinc-finger motif lies at 120-141 (HLNRKFLRKEPLVWIDCYCIDC).

Interacts with host PPP2R1A; the interaction inhibits PP2A activity.

The protein localises to the host cytoplasm. Its subcellular location is the host nucleus. Its function is as follows. Promotes efficient viral genome replication by accelerating both G1 and S phase progression of the cell cycle. Inhibits host PP2A by binding to the A subunit, thereby displacing lower affinity regulatory B subunit. Inactivation of PP2A in turn results in the transactivation of cyclin A and cyclin D1 promoters. Late during the infection cycle, ST may induce dephosphorylation of host MTOR, leading to the inhibition of cap-dependent translation. May establish and maintain high levels of viral genomes during persistent infection in cell culture. The protein is Small t antigen of Homo sapiens (Human).